The sequence spans 235 residues: Ribonuclease PH (235 aa).

Phosphate-binding positions include arginine 86 and 124–126 (GTR).

This sequence belongs to the RNase PH family. In terms of assembly, homohexameric ring arranged as a trimer of dimers.

The enzyme catalyses tRNA(n+1) + phosphate = tRNA(n) + a ribonucleoside 5'-diphosphate. Functionally, phosphorolytic 3'-5' exoribonuclease that plays an important role in tRNA 3'-end maturation. Removes nucleotide residues following the 3'-CCA terminus of tRNAs; can also add nucleotides to the ends of RNA molecules by using nucleoside diphosphates as substrates, but this may not be physiologically important. Probably plays a role in initiation of 16S rRNA degradation (leading to ribosome degradation) during starvation. The protein is Ribonuclease PH of Francisella philomiragia subsp. philomiragia (strain ATCC 25017 / CCUG 19701 / FSC 153 / O#319-036).